We begin with the raw amino-acid sequence, 359 residues long: Probably inactive receptor-like protein kinase At5g41680 (359 aa).

A Protein kinase domain is found at 59 to 357 (AASAEILGKG…KLIQDIPTNF (299 aa)). Residues 65-73 (LGKGAHVTT) and Lys-87 each bind ATP.

It belongs to the protein kinase superfamily. Ser/Thr protein kinase family.

The chain is Probably inactive receptor-like protein kinase At5g41680 from Arabidopsis thaliana (Mouse-ear cress).